A 162-amino-acid chain; its full sequence is Auracyanin-A (162 aa).

The signal sequence occupies residues 1-22 (MKITLRMMVLAVLTAMAMVLAA). C23 is lipidated: N-palmitoyl cysteine. The S-diacylglycerol cysteine moiety is linked to residue C23. The Plastocyanin-like domain occupies 42–162 (VTIEIGSKGE…PLMQGKLVVN (121 aa)). Residues H81, C146, H151, and M155 each contribute to the Cu cation site.

As to quaternary structure, monomer. The cofactor is Cu cation.

It localises to the cell membrane. In terms of biological role, probably a soluble electron acceptor for the integral membrane protein electron transfer alternative complex III (ACIII). In Chloroflexus aurantiacus (strain ATCC 29366 / DSM 635 / J-10-fl), this protein is Auracyanin-A.